The sequence spans 108 residues: uncharacterized protein (108 aa).

A helical transmembrane segment spans residues 25–45 (VILKSFLLISSWVILVLLLVI).

It is found in the membrane. This is an uncharacterized protein from Saccharomyces cerevisiae (strain ATCC 204508 / S288c) (Baker's yeast).